Here is a 375-residue protein sequence, read N- to C-terminus: Neuropeptide Y receptor type 4 (375 aa).

Topologically, residues 1–39 are extracellular; that stretch reads MNTSHFLAPLFPGSLQGKNGTNPLDSPYNFSDGCQDSAE. Residues Asn-2, Asn-19, and Asn-29 are each glycosylated (N-linked (GlcNAc...) asparagine). Residues 40-60 traverse the membrane as a helical segment; the sequence is LLAFIITTYSIETILGVLGNL. Residues 61–78 lie on the Cytoplasmic side of the membrane; that stretch reads CLIFVTTRQKEKSNVTNL. Residues 79-99 form a helical membrane-spanning segment; sequence LIANLAFSDFLMCLICQPLTV. The Extracellular segment spans residues 100 to 116; sequence TYTIMDYWIFGEVLCKM. The cysteines at positions 114 and 201 are disulfide-linked. Residues 117-137 form a helical membrane-spanning segment; the sequence is LTFIQCMSVTVSILSLVLVAL. Topologically, residues 138–155 are cytoplasmic; that stretch reads ERHQLIINPTGWKPSIFQ. Residues 156–176 traverse the membrane as a helical segment; that stretch reads AYLGIVVIWFVSCFLSLPFLA. The Extracellular segment spans residues 177 to 211; sequence NSTLNDLFHYNHSKVVEFLEDKVVCFVSWSSDHHR. Asn-187 carries an N-linked (GlcNAc...) asparagine glycan. A helical membrane pass occupies residues 212–232; it reads LIYTTFLLLFQYCIPLAFILV. Over 233–266 the chain is Cytoplasmic; it reads CYIRIYQRLQRQKHVFHAHACSSRAGQMKRINSM. The chain crosses the membrane as a helical span at residues 267-287; that stretch reads LMTMVTAFAVLWLPLHVFNTL. At 288–301 the chain is on the extracellular side; it reads EDWYQEAIPACHGN. Residues 302 to 322 form a helical membrane-spanning segment; it reads LIFLMCHLLAMASTCVNPFIY. Residues 323–375 lie on the Cytoplasmic side of the membrane; it reads GFLNINFKKDIKALVLTCHCRSPRGESEHLPLSTVHTDLSKGSMRMGSKSNFI. Cys-340 is lipidated: S-palmitoyl cysteine.

This sequence belongs to the G-protein coupled receptor 1 family. As to expression, heart, detected in small intestine.

The protein localises to the cell membrane. Functionally, g protein-coupled receptor for PPY/pancreatic polypeptide/PP that is negatively coupled to cAMP. Has much lower affinity for the NPY/neuropeptide Y and PYY/peptide YY. This Mus musculus (Mouse) protein is Neuropeptide Y receptor type 4 (Npy4r).